An 813-amino-acid polypeptide reads, in one-letter code: LPS-assembly protein LptD (813 aa).

The interval 1 to 29 is disordered; that stretch reads MTEQRRSPNNRALPSPAPTSVPARARRAG. Positions 1 to 52 are cleaved as a signal peptide; that stretch reads MTEQRRSPNNRALPSPAPTSVPARARRAGGLHAGALRPLVLAMASLSAGAHA.

It belongs to the LptD family. As to quaternary structure, component of the lipopolysaccharide transport and assembly complex. Interacts with LptE and LptA.

It is found in the cell outer membrane. Together with LptE, is involved in the assembly of lipopolysaccharide (LPS) at the surface of the outer membrane. The protein is LPS-assembly protein LptD of Cupriavidus necator (strain ATCC 17699 / DSM 428 / KCTC 22496 / NCIMB 10442 / H16 / Stanier 337) (Ralstonia eutropha).